Reading from the N-terminus, the 488-residue chain is Cysteine--tRNA ligase (488 aa).

Residue Cys40 coordinates Zn(2+). Positions 42-52 (MTVYDYCHIGH) match the 'HIGH' region motif. Residues Cys221, His246, and Glu250 each contribute to the Zn(2+) site. The 'KMSKS' region motif lies at 278–282 (KMSKS). Lys281 contacts ATP.

Belongs to the class-I aminoacyl-tRNA synthetase family. As to quaternary structure, monomer. Zn(2+) serves as cofactor.

It localises to the cytoplasm. It carries out the reaction tRNA(Cys) + L-cysteine + ATP = L-cysteinyl-tRNA(Cys) + AMP + diphosphate. The protein is Cysteine--tRNA ligase of Psychrobacter cryohalolentis (strain ATCC BAA-1226 / DSM 17306 / VKM B-2378 / K5).